The primary structure comprises 467 residues: Fumarate hydratase class II (467 aa).

Residues 98–100, R126, 129–132, 139–141, and T187 contribute to the substrate site; these read SGT, HPND, and SSN. The Proton donor/acceptor role is filled by H188. The active site involves S318. Residues S319 and 324 to 326 each bind substrate; that span reads KVN.

It belongs to the class-II fumarase/aspartase family. Fumarase subfamily. Homotetramer.

It localises to the cytoplasm. It catalyses the reaction (S)-malate = fumarate + H2O. It functions in the pathway carbohydrate metabolism; tricarboxylic acid cycle; (S)-malate from fumarate: step 1/1. Involved in the TCA cycle. Catalyzes the stereospecific interconversion of fumarate to L-malate. The sequence is that of Fumarate hydratase class II from Salmonella typhimurium (strain LT2 / SGSC1412 / ATCC 700720).